The primary structure comprises 1038 residues: Protein argonaute 1D (1038 aa).

Disordered regions lie at residues 1 to 58 (MGSR…GAAP) and 110 to 134 (APHE…PRSL). 2 stretches are compositionally biased toward gly residues: residues 18-29 (RGGGRGGGGRGR) and 43-52 (GHGGRGGAGY). Residues 115-134 (PANVSSPEAASPEASSPRSL) are compositionally biased toward low complexity. A PAZ domain is found at 380 to 493 (PVIDFVIQLL…LPMEVCKIVE (114 aa)). The region spanning 669–990 (LLIGLLPDNN…AAFRARFYME (322 aa)) is the Piwi domain. Positions 992–1021 (DSSDSGSMASGRGGGSSTSRSTRAAGGGAV) are disordered.

Belongs to the argonaute family. Ago subfamily.

In terms of biological role, probably involved in the RNA silencing pathway. May bind to short RNAs such as microRNAs (miRNAs) or short interfering RNAs (siRNAs), and represses the translation of mRNAs which are complementary to them. The chain is Protein argonaute 1D (AGO1D) from Oryza sativa subsp. japonica (Rice).